The chain runs to 216 residues: Ribosomal RNA small subunit methyltransferase G (216 aa).

S-adenosyl-L-methionine-binding positions include G82, L87, 135-136, and R148; that span reads AE.

The protein belongs to the methyltransferase superfamily. RNA methyltransferase RsmG family.

The protein resides in the cytoplasm. The enzyme catalyses guanosine(527) in 16S rRNA + S-adenosyl-L-methionine = N(7)-methylguanosine(527) in 16S rRNA + S-adenosyl-L-homocysteine. In terms of biological role, specifically methylates the N7 position of guanine in position 527 of 16S rRNA. The polypeptide is Ribosomal RNA small subunit methyltransferase G (Caulobacter vibrioides (strain ATCC 19089 / CIP 103742 / CB 15) (Caulobacter crescentus)).